Consider the following 719-residue polypeptide: Polyphosphate kinase (719 aa).

An ATP-binding site is contributed by Asn47. Mg(2+)-binding residues include Arg377 and Arg407. His437 serves as the catalytic Phosphohistidine intermediate. ATP-binding residues include Tyr470, Arg566, and His594.

This sequence belongs to the polyphosphate kinase 1 (PPK1) family. Requires Mg(2+) as cofactor. Post-translationally, an intermediate of this reaction is the autophosphorylated ppk in which a phosphate is covalently linked to a histidine residue through a N-P bond.

It catalyses the reaction [phosphate](n) + ATP = [phosphate](n+1) + ADP. Functionally, catalyzes the reversible transfer of the terminal phosphate of ATP to form a long-chain polyphosphate (polyP). In Exiguobacterium sibiricum (strain DSM 17290 / CCUG 55495 / CIP 109462 / JCM 13490 / 255-15), this protein is Polyphosphate kinase.